The primary structure comprises 182 residues: Peptidyl-tRNA hydrolase (182 aa).

Residue Tyr-14 participates in tRNA binding. The Proton acceptor role is filled by His-19. TRNA is bound by residues Phe-60, Asn-62, and Asn-106.

It belongs to the PTH family. Monomer.

The protein localises to the cytoplasm. The catalysed reaction is an N-acyl-L-alpha-aminoacyl-tRNA + H2O = an N-acyl-L-amino acid + a tRNA + H(+). Its function is as follows. Hydrolyzes ribosome-free peptidyl-tRNAs (with 1 or more amino acids incorporated), which drop off the ribosome during protein synthesis, or as a result of ribosome stalling. Functionally, catalyzes the release of premature peptidyl moieties from peptidyl-tRNA molecules trapped in stalled 50S ribosomal subunits, and thus maintains levels of free tRNAs and 50S ribosomes. This is Peptidyl-tRNA hydrolase from Campylobacter concisus (strain 13826).